Reading from the N-terminus, the 148-residue chain is Deoxyuridine 5'-triphosphate nucleotidohydrolase (148 aa).

Residues 68-70 (RSG), asparagine 81, 85-87 (TID), and lysine 95 each bind substrate.

This sequence belongs to the dUTPase family. Mg(2+) serves as cofactor.

It carries out the reaction dUTP + H2O = dUMP + diphosphate + H(+). It participates in pyrimidine metabolism; dUMP biosynthesis; dUMP from dCTP (dUTP route): step 2/2. This enzyme is involved in nucleotide metabolism: it produces dUMP, the immediate precursor of thymidine nucleotides and it decreases the intracellular concentration of dUTP so that uracil cannot be incorporated into DNA. This Rickettsia peacockii (strain Rustic) protein is Deoxyuridine 5'-triphosphate nucleotidohydrolase.